A 618-amino-acid chain; its full sequence is Chaperone protein dnaK (618 aa).

The disordered stretch occupies residues 595 to 618; it reads SKTETTTPNKNEEDVIDASFSEEK.

It belongs to the heat shock protein 70 family.

Its subcellular location is the plastid. The protein resides in the cyanelle. In terms of biological role, acts as a chaperone. The chain is Chaperone protein dnaK (dnaK-A) from Cyanophora paradoxa.